Consider the following 435-residue polypeptide: Minor fimbrial subunit HifE (435 aa).

Positions 1-31 (MKTLTTYAKYFTPISKIAFLFCFLMGNIAEA) are cleaved as a signal peptide.

This sequence belongs to the fimbrial protein family.

The protein resides in the fimbrium. Its function is as follows. May be a minor structural protein required for pilus biogenesis. May be the adhesive component in the pili. This chain is Minor fimbrial subunit HifE (hifE), found in Haemophilus influenzae.